The sequence spans 394 residues: MTQLETRTEPMVVNFGPHHPSMHGVLRLVVTLDGEDVVDCEPVIGYLHRGMEKIAENRTNVMFVPYVSRMDYAAGMFYEAVVVNAPEKLADIPVPKRASYIRVLMLELNRIANHLLWLGPFLADVGAQTPFFYIFREREMIYDLWEAATGQRLINNNYFRIGGVAADLPWGWLEKCRDFCDWFGPKIDEYEKLITNNPIFRRRIEGLGVIGKEEAINWSLSGPMLRASGVPWDLRKVDHYECYDDFDWDVAWEKEGDCFARYRVRIEEMRQSLKILRQACDMIPGGPTENVEARRMAEGKDSEFAGFDYQYVAKKVAPTFKIPNGELYTRLESGKGEIGIFIQGNNDVTPWRFKIRAADSNNLQILPHILKGHKVADIMAILGSIDVIMGSVDR.

The protein belongs to the complex I 49 kDa subunit family. In terms of assembly, NDH-1 can be composed of about 15 different subunits; different subcomplexes with different compositions have been identified which probably have different functions.

The protein localises to the cellular thylakoid membrane. It carries out the reaction a plastoquinone + NADH + (n+1) H(+)(in) = a plastoquinol + NAD(+) + n H(+)(out). The enzyme catalyses a plastoquinone + NADPH + (n+1) H(+)(in) = a plastoquinol + NADP(+) + n H(+)(out). Functionally, NDH-1 shuttles electrons from an unknown electron donor, via FMN and iron-sulfur (Fe-S) centers, to quinones in the respiratory and/or the photosynthetic chain. The immediate electron acceptor for the enzyme in this species is believed to be plastoquinone. Couples the redox reaction to proton translocation, and thus conserves the redox energy in a proton gradient. Cyanobacterial NDH-1 also plays a role in inorganic carbon-concentration. This Synechococcus sp. (strain WH7803) protein is NAD(P)H-quinone oxidoreductase subunit H.